The primary structure comprises 156 residues: 6,7-dimethyl-8-ribityllumazine synthase (156 aa).

Residues F25, 59–61, and 83–85 contribute to the 5-amino-6-(D-ribitylamino)uracil site; these read AFE and AVI. 88 to 89 is a (2S)-2-hydroxy-3-oxobutyl phosphate binding site; the sequence is GT. The Proton donor role is filled by H91. Residue F116 participates in 5-amino-6-(D-ribitylamino)uracil binding. Position 130 (R130) interacts with (2S)-2-hydroxy-3-oxobutyl phosphate.

This sequence belongs to the DMRL synthase family.

It carries out the reaction (2S)-2-hydroxy-3-oxobutyl phosphate + 5-amino-6-(D-ribitylamino)uracil = 6,7-dimethyl-8-(1-D-ribityl)lumazine + phosphate + 2 H2O + H(+). The protein operates within cofactor biosynthesis; riboflavin biosynthesis; riboflavin from 2-hydroxy-3-oxobutyl phosphate and 5-amino-6-(D-ribitylamino)uracil: step 1/2. In terms of biological role, catalyzes the formation of 6,7-dimethyl-8-ribityllumazine by condensation of 5-amino-6-(D-ribitylamino)uracil with 3,4-dihydroxy-2-butanone 4-phosphate. This is the penultimate step in the biosynthesis of riboflavin. In Desulfovibrio desulfuricans (strain ATCC 27774 / DSM 6949 / MB), this protein is 6,7-dimethyl-8-ribityllumazine synthase.